Reading from the N-terminus, the 444-residue chain is MDPLNLSWYDDDLERQNWSRPFNGSEGKPDRPHYNYYAMLLTLLIFIIVFGNVLVCMAVSREKALQTTTNYLIVSLAVADLLVATLVMPWVVYLEVVGEWKFSRIHCDIFVTLDVMMCTASILNLCAISIDRYTAVAMPMLYNTRYSSKRRVTVMIAIVWVLSFTISCPLLFGLNNTDQNECIIANPAFVVYSSIVSFYVPFIVTLLVYIKIYIVLRKRRKRVNTKRSSRAFRANLKTPLKGNCTHPEDMKLCTVIMKSNGSFPVNRRRMDAARRAQELEMEMLSSTSPPERTRYSPIPPSHHQLTLPDPSHHGLHSNPDSPAKPEKNGHAKIVNPRIAKFFEIQTMPNGKTRTSLKTMSRRKLSQQKEKKATQMLAIVLGVFIICWLPFFITHILNIHCDCNIPPVLYSAFTWLGYVNSAVNPIIYTTFNIEFRKAFMKILHC.

Residues 1–37 (MDPLNLSWYDDDLERQNWSRPFNGSEGKPDRPHYNYY) lie on the Extracellular side of the membrane. 3 N-linked (GlcNAc...) asparagine glycosylation sites follow: Asn-5, Asn-17, and Asn-23. Residues 38–60 (AMLLTLLIFIIVFGNVLVCMAVS) traverse the membrane as a helical segment. Over 61 to 70 (REKALQTTTN) the chain is Cytoplasmic. Residues 71-93 (YLIVSLAVADLLVATLVMPWVVY) traverse the membrane as a helical segment. Over 94–108 (LEVVGEWKFSRIHCD) the chain is Extracellular. Cys-107 and Cys-182 are disulfide-bonded. Residues 109–130 (IFVTLDVMMCTASILNLCAISI) form a helical membrane-spanning segment. Over 131–151 (DRYTAVAMPMLYNTRYSSKRR) the chain is Cytoplasmic. Residues 152–172 (VTVMIAIVWVLSFTISCPLLF) traverse the membrane as a helical segment. Over 173-188 (GLNNTDQNECIIANPA) the chain is Extracellular. The chain crosses the membrane as a helical span at residues 189–213 (FVVYSSIVSFYVPFIVTLLVYIKIY). The tract at residues 211 to 374 (KIYIVLRKRR…SQQKEKKATQ (164 aa)) is interaction with PPP1R9B. Topologically, residues 214–374 (IVLRKRRKRV…SQQKEKKATQ (161 aa)) are cytoplasmic. Residues 282–329 (EMLSSTSPPERTRYSPIPPSHHQLTLPDPSHHGLHSNPDSPAKPEKNG) form a disordered region. A helical membrane pass occupies residues 375–396 (MLAIVLGVFIICWLPFFITHIL). Over 397–410 (NIHCDCNIPPVLYS) the chain is Extracellular. The cysteines at positions 400 and 402 are disulfide-linked. A helical transmembrane segment spans residues 411–432 (AFTWLGYVNSAVNPIIYTTFNI). The Cytoplasmic portion of the chain corresponds to 433 to 444 (EFRKAFMKILHC). Cys-444 is lipidated: S-palmitoyl cysteine.

It belongs to the G-protein coupled receptor 1 family. Forms homo- and heterooligomers with DRD4. The interaction with DRD4 may modulate agonist-induced downstream signaling. Interacts with CADPS and CADPS2. Interacts with GPRASP1, PPP1R9B and CLIC6. Interacts with ARRB2. Interacts with HTR2A. Interacts with DRD1. In terms of assembly, interacts with KCNA2. Post-translationally, palmitoylated. Palmitoylation which is required for proper localization to the plasma membrane and stability of the receptor could be carried on by ZDHHC4, ZDHHC3 and ZDHHC8. Expressed in retinal hyaloid vessels at postnatal day 6. As to expression, expressed in the pituitary gland, stratum, brain stem and cortex. In terms of tissue distribution, expressed in the brain stem.

The protein resides in the cell membrane. It localises to the golgi apparatus membrane. Functionally, dopamine receptor whose activity is mediated by G proteins which inhibit adenylyl cyclase. Positively regulates postnatal regression of retinal hyaloid vessels via suppression of VEGFR2/KDR activity, downstream of OPN5. The protein is D(2) dopamine receptor (Drd2) of Mus musculus (Mouse).